Here is a 284-residue protein sequence, read N- to C-terminus: RNA polymerase sigma factor RpoH (284 aa).

A sigma-70 factor domain-2 region spans residues 54–123; the sequence is MVLAHLRFVV…IHEFILRNWR (70 aa). Residues 78–81 carry the Interaction with polymerase core subunit RpoC motif; sequence DLIQ. The tract at residues 229–280 is sigma-70 factor domain-4; it reads ALEGLDERSRDILQQRWLSEEKATLHDLAEKYNVSAERIRQLEKNAMSKLKG. Residues 253-272 constitute a DNA-binding region (H-T-H motif); that stretch reads LHDLAEKYNVSAERIRQLEK.

This sequence belongs to the sigma-70 factor family. RpoH subfamily. In terms of assembly, interacts with the RNA polymerase core enzyme.

The protein resides in the cytoplasm. Sigma factors are initiation factors that promote the attachment of RNA polymerase to specific initiation sites and are then released. This sigma factor is involved in regulation of expression of heat shock genes. The sequence is that of RNA polymerase sigma factor RpoH from Pseudomonas aeruginosa (strain ATCC 15692 / DSM 22644 / CIP 104116 / JCM 14847 / LMG 12228 / 1C / PRS 101 / PAO1).